Consider the following 78-residue polypeptide: Alpha-amylase inhibitor Haim-1 (78 aa).

Intrachain disulfides connect Cys-11–Cys-27 and Cys-45–Cys-72.

Functionally, inhibits mammalian alpha-amylases specifically but has no action on plant and microbial alpha-amylases. The sequence is that of Alpha-amylase inhibitor Haim-1 from Streptomyces griseosporeus.